The primary structure comprises 111 residues: Integration host factor subunit alpha (111 aa).

This sequence belongs to the bacterial histone-like protein family. In terms of assembly, heterodimer of an alpha and a beta chain.

Functionally, this protein is one of the two subunits of integration host factor, a specific DNA-binding protein that functions in genetic recombination as well as in transcriptional and translational control. This Polaromonas sp. (strain JS666 / ATCC BAA-500) protein is Integration host factor subunit alpha.